Here is a 688-residue protein sequence, read N- to C-terminus: G protein-coupled receptor kinase 3 (688 aa).

Positions 1 to 190 (MADLEAVLAD…ELNIHLSMND (190 aa)) are N-terminal. Residues 54 to 175 (TFDKIFNQKI…MESDKFTRFC (122 aa)) form the RGS domain. Positions 191–453 (FSVHRIIGRG…ARELKEHIFF (263 aa)) constitute a Protein kinase domain. ATP is bound by residues 197–205 (IGRGGFGEV) and K220. D317 functions as the Proton acceptor in the catalytic mechanism. Positions 454–521 (KGIDWQHVYL…VISERWQQEV (68 aa)) constitute an AGC-kinase C-terminal domain. One can recognise a PH domain in the interval 558–652 (DCIMHGYMLK…WLKELTCTFN (95 aa)).

It belongs to the protein kinase superfamily. AGC Ser/Thr protein kinase family. GPRK subfamily. Interacts with GIT1. In terms of processing, ubiquitinated.

It localises to the postsynapse. Its subcellular location is the presynapse. It catalyses the reaction [beta-adrenergic receptor] + ATP = [beta-adrenergic receptor]-phosphate + ADP + H(+). Functionally, specifically phosphorylates the agonist-occupied form of the beta-adrenergic and closely related receptors. This Mus musculus (Mouse) protein is G protein-coupled receptor kinase 3.